Reading from the N-terminus, the 524-residue chain is Capsid scaffolding protein (524 aa).

Active-site charge relay system residues include histidine 47, serine 116, and histidine 137. Residues 268–287 form an interaction with pAP region; it reads DDLIPVPRSAFLNMLESTVS. Residues 359–365 carry the Nuclear localization signal motif; that stretch reads RPRKRAR. Positions 359-378 are disordered; that stretch reads RPRKRAREDPEDEVSFPGEE. The tract at residues 504-524 is interaction with major capsid protein; the sequence is AETSKAATLQKLFCDEMLSKQ.

This sequence belongs to the herpesviridae capsid scaffolding protein family. In terms of assembly, homomultimer. Interacts with major capsid protein. As to quaternary structure, exists in a monomer-dimer equilibrium with the dimer being the active species. Post-translationally, capsid scaffolding protein is cleaved by assemblin after formation of the spherical procapsid. As a result, the capsid obtains its mature, icosahedral shape. Cleavages occur at two or more sites: release (R-site) and maturation (M-site).

The protein localises to the host cytoplasm. It localises to the host nucleus. The enzyme catalyses Cleaves -Ala-|-Ser- and -Ala-|-Ala- bonds in the scaffold protein.. Functionally, acts as a scaffold protein by binding major capsid protein in the cytoplasm, inducing the nuclear localization of both proteins. Multimerizes in the nucleus such as major capsid protein forms the icosahedral T=16 capsid. Autocatalytic cleavage releases the assembly protein, and subsequently abolishes interaction with major capsid protein. Cleavages products are evicted from the capsid before or during DNA packaging. Its function is as follows. Protease that plays an essential role in virion assembly within the nucleus. Catalyzes the cleavage of the assembly protein after formation of the spherical procapsid. By that cleavage, the capsid matures and gains its icosahedral shape. The cleavage sites seem to include -Ala-Ser-, -Ala-Ala-, as well as Ala-Thr bonds. Assemblin and cleavages products are evicted from the capsid before or during DNA packaging. In terms of biological role, plays a major role in capsid assembly. Acts as a scaffold protein by binding major capsid protein. Multimerizes in the nucleus such as major capsid protein forms the icosahedral T=16 capsid. Cleaved by assemblin after capsid completion. The cleavages products are evicted from the capsid before or during DNA packaging. The chain is Capsid scaffolding protein (17) from Connochaetes taurinus (Blue wildebeest).